A 152-amino-acid chain; its full sequence is Ribosome maturation factor RimP (152 aa).

This sequence belongs to the RimP family.

It is found in the cytoplasm. Required for maturation of 30S ribosomal subunits. The protein is Ribosome maturation factor RimP of Aeromonas hydrophila subsp. hydrophila (strain ATCC 7966 / DSM 30187 / BCRC 13018 / CCUG 14551 / JCM 1027 / KCTC 2358 / NCIMB 9240 / NCTC 8049).